Reading from the N-terminus, the 447-residue chain is MDEEYDVIVLGTGLTECILSGIMSVNGKKVLHMDRNPYYGGESSSITPLEELYKRFQLLEGPPESMGRGRDWNVDLIPKFLMANGQLVKMLLYTEVTRYLDFKVVEGSFVYKGGKIYKVPSTETEALASNLMGMFEKRRFRKFLVFVANFDENDPKTFEGVDPQTTSMRDVYRKFDLGQDVIDFTGHALALYRTDDYLDQPCLETINRIKLYSESLARYGKSPYLYPLYGLGELPQGFARLSAIYGGTYMLNKPVDDIIMENGKVVGVKSEGEVARCKQLICDPSYIPDRVRKAGQVIRIICILSHPIKNTNDANSCQIIIPQNQVNRKSDIYVCMISYAHNVAAQGKYIAIASTTVETAEPEKEVEPALELLEPIDQKFVAISDLYEPIDDGSESQVFCSCSYDATTHFETTCNDIKDIYKRMAGSAFDFENMKRKQNDVFGEADQ.

Ser-427 carries the post-translational modification Phosphoserine.

The protein belongs to the Rab GDI family. In terms of assembly, interacts with RHOH. Interacts with the non-phosphorylated forms of RAB1A, RAB3A, RAB5A, RAB5B, RAB5C, RAB8A, RAB8B, RAB10, RAB12, RAB35, and RAB43. High expression in brain, lower in other tissues.

It is found in the cytoplasm. Its subcellular location is the golgi apparatus. The protein localises to the trans-Golgi network. Its function is as follows. Regulates the GDP/GTP exchange reaction of most Rab proteins by inhibiting the dissociation of GDP from them, and the subsequent binding of GTP to them. Promotes the dissociation of GDP-bound Rab proteins from the membrane and inhibits their activation. Promotes the dissociation of RAB1A, RAB3A, RAB5A and RAB10 from membranes. The chain is Rab GDP dissociation inhibitor alpha (Gdi1) from Rattus norvegicus (Rat).